Consider the following 85-residue polypeptide: Insecticidal toxin Vn1 (85 aa).

A signal peptide spans 1-23 (MFLYRLICLFILICIITVDISTS). The cysteines at positions 71 and 84 are disulfide-linked.

Highly expressed in the venom apparatus, and weakly expressed in residual body.

It is found in the secreted. Endoparasitoid venom toxin that exhibits insecticidal activity against Tenebrio molitor pupae. Impacts genes related to immune response, environmental information processing, metabolism, and response to external stimuli in T.molitor, suggesting its involvement in the intricate parasitoid wasp-host interaction. The protein is Insecticidal toxin Vn1 of Aphidius gifuensis (Parasitoid wasp).